Consider the following 116-residue polypeptide: NADPH-dependent 7-cyano-7-deazaguanine reductase (116 aa).

The active-site Thioimide intermediate is the Cys-31. The active-site Proton donor is Asp-38. Residues Val-53–Leu-55 and Tyr-72–Glu-73 contribute to the substrate site.

This sequence belongs to the GTP cyclohydrolase I family. QueF type 1 subfamily.

Its subcellular location is the cytoplasm. The catalysed reaction is 7-aminomethyl-7-carbaguanine + 2 NADP(+) = 7-cyano-7-deazaguanine + 2 NADPH + 3 H(+). It participates in tRNA modification; tRNA-queuosine biosynthesis. Catalyzes the NADPH-dependent reduction of 7-cyano-7-deazaguanine (preQ0) to 7-aminomethyl-7-deazaguanine (preQ1). The polypeptide is NADPH-dependent 7-cyano-7-deazaguanine reductase (Chlorobium phaeobacteroides (strain DSM 266 / SMG 266 / 2430)).